The sequence spans 567 residues: MSQRITIDPVTRIEGHLRIDCEIENGVVSKAWASGTMWRGMEEIVKNRDPRDAWMIVQRICGVCTTTHALSSVRAAESALNIDVPVNAQYIRNIILAAHTTHDHIVHFYQLSALDWVDITSALQADPTKASEMLKGVSTWHLNSPEEFTKVQNKIKDLVASGQLGIFANGYWGHPAMKLPPEVNLIAVAHYLQALECQRDANRVVALLGGKTPHIQNLAVGGVANPINLDGLGVLNLERLMYIKSFIDKLSDFVEQVYKVDTAVIAAFYPEWLTRGKGAVNYLSVPEFPTDSKNGSFLFPGGYIENADLSSYRPITSHSDEYLIKGIQESAKHSWYKDEAPQAPWEGTTIPAYDGWSDDGKYSWVKSPTFYGKTVEVGPLANMLVKLAAGRESTQNKLNEIVAIYQKLTGNTLEVAQLHSTLGRIIGRTVHCCELQDILQNQYSALITNIGKGDHTTFVKPNIPATGEFKGVGFLEAPRGMLSHWMVIKDGIISNYQAVVPSTWNSGPRNFNDDVGPYEQSLVGTPVADPNKPLEVVRTIHSFDPCMACAVHVVDADGNEVVSVKVL.

Ni(2+) is bound by residues Cys61, Cys64, Cys546, and Cys549. The propeptide occupies 553 to 567; the sequence is VVDADGNEVVSVKVL.

The protein belongs to the [NiFe]/[NiFeSe] hydrogenase large subunit family. In terms of assembly, heterodimer of a large and a small subunit. The cofactor is Ni(2+).

The protein resides in the cell membrane. The enzyme catalyses H2 + A = AH2. In terms of biological role, this is one of three E.coli hydrogenases synthesized in response to different physiological conditions. HYD2 is involved in hydrogen uptake. This is Hydrogenase-2 large chain (hybC) from Escherichia coli O157:H7.